The chain runs to 388 residues: Succinate--CoA ligase [ADP-forming] subunit beta (388 aa).

The 237-residue stretch at 9–245 (KELLASYGLP…KSQENERELK (237 aa)) folds into the ATP-grasp domain. ATP is bound by residues Lys-46, 53 to 55 (GRG), Glu-100, Tyr-103, and Glu-108. 2 residues coordinate Mg(2+): Asn-200 and Asp-214. Substrate-binding positions include Asn-265 and 322-324 (GIV).

It belongs to the succinate/malate CoA ligase beta subunit family. Heterotetramer of two alpha and two beta subunits. Mg(2+) is required as a cofactor.

The enzyme catalyses succinate + ATP + CoA = succinyl-CoA + ADP + phosphate. It catalyses the reaction GTP + succinate + CoA = succinyl-CoA + GDP + phosphate. It functions in the pathway carbohydrate metabolism; tricarboxylic acid cycle; succinate from succinyl-CoA (ligase route): step 1/1. Succinyl-CoA synthetase functions in the citric acid cycle (TCA), coupling the hydrolysis of succinyl-CoA to the synthesis of either ATP or GTP and thus represents the only step of substrate-level phosphorylation in the TCA. The beta subunit provides nucleotide specificity of the enzyme and binds the substrate succinate, while the binding sites for coenzyme A and phosphate are found in the alpha subunit. The polypeptide is Succinate--CoA ligase [ADP-forming] subunit beta (Neisseria gonorrhoeae (strain ATCC 700825 / FA 1090)).